We begin with the raw amino-acid sequence, 798 residues long: Elongation factor G, mitochondrial (798 aa).

Residues 1–24 (MRVIRAAAALNSSCAASSRQGARY) constitute a mitochondrion transit peptide. The tr-type G domain occupies 97 to 383 (SMVRNIGIAA…AVCDYLPNPG (287 aa)). Residues 106-113 (AHIDSGKT), 181-185 (DTPGH), and 235-238 (NKMD) contribute to the GTP site.

The protein belongs to the TRAFAC class translation factor GTPase superfamily. Classic translation factor GTPase family. EF-G/EF-2 subfamily.

The protein resides in the mitochondrion. It participates in protein biosynthesis; polypeptide chain elongation. Mitochondrial GTPase that catalyzes the GTP-dependent ribosomal translocation step during translation elongation. During this step, the ribosome changes from the pre-translocational (PRE) to the post-translocational (POST) state as the newly formed A-site-bound peptidyl-tRNA and P-site-bound deacylated tRNA move to the P and E sites, respectively. Catalyzes the coordinated movement of the two tRNA molecules, the mRNA and conformational changes in the ribosome. The polypeptide is Elongation factor G, mitochondrial (Chaetomium globosum (strain ATCC 6205 / CBS 148.51 / DSM 1962 / NBRC 6347 / NRRL 1970) (Soil fungus)).